We begin with the raw amino-acid sequence, 135 residues long: Protein NrdI (135 aa).

It belongs to the NrdI family.

In terms of biological role, probably involved in ribonucleotide reductase function. This chain is Protein NrdI, found in Rhizobium johnstonii (strain DSM 114642 / LMG 32736 / 3841) (Rhizobium leguminosarum bv. viciae).